The primary structure comprises 72 residues: Translation initiation factor IF-1 (72 aa).

The S1-like domain occupies 1–72 (MAKEEMLEFP…TKGRINYRFK (72 aa)).

It belongs to the IF-1 family. As to quaternary structure, component of the 30S ribosomal translation pre-initiation complex which assembles on the 30S ribosome in the order IF-2 and IF-3, IF-1 and N-formylmethionyl-tRNA(fMet); mRNA recruitment can occur at any time during PIC assembly.

It is found in the cytoplasm. Its function is as follows. One of the essential components for the initiation of protein synthesis. Stabilizes the binding of IF-2 and IF-3 on the 30S subunit to which N-formylmethionyl-tRNA(fMet) subsequently binds. Helps modulate mRNA selection, yielding the 30S pre-initiation complex (PIC). Upon addition of the 50S ribosomal subunit IF-1, IF-2 and IF-3 are released leaving the mature 70S translation initiation complex. This chain is Translation initiation factor IF-1, found in Jannaschia sp. (strain CCS1).